The chain runs to 456 residues: Ribosomal protein uS12 methylthiotransferase RimO (456 aa).

Residues 11 to 126 form the MTTase N-terminal domain; it reads PKVGFVSLGC…VMQAVHTHLP (116 aa). [4Fe-4S] cluster is bound by residues Cys-20, Cys-56, Cys-85, Cys-157, Cys-161, and Cys-164. Residues 143-384 form the Radical SAM core domain; the sequence is LTPKHYAYLK…MEVAEEVSAR (242 aa). A TRAM domain is found at 387 to 456; it reads QRKVGQTLRV…DGHDLWGEVA (70 aa).

It belongs to the methylthiotransferase family. RimO subfamily. It depends on [4Fe-4S] cluster as a cofactor.

It localises to the cytoplasm. It catalyses the reaction L-aspartate(89)-[ribosomal protein uS12]-hydrogen + (sulfur carrier)-SH + AH2 + 2 S-adenosyl-L-methionine = 3-methylsulfanyl-L-aspartate(89)-[ribosomal protein uS12]-hydrogen + (sulfur carrier)-H + 5'-deoxyadenosine + L-methionine + A + S-adenosyl-L-homocysteine + 2 H(+). Functionally, catalyzes the methylthiolation of an aspartic acid residue of ribosomal protein uS12. The sequence is that of Ribosomal protein uS12 methylthiotransferase RimO from Cupriavidus metallidurans (strain ATCC 43123 / DSM 2839 / NBRC 102507 / CH34) (Ralstonia metallidurans).